We begin with the raw amino-acid sequence, 1012 residues long: MTNLMDHTQQIVPFIRSLLMPTTGPASIPDDTLEKHTLRSETSTYNLTVGDTGSGLIVFFPGFPGSVVGAHYTLQSSGSYQFDQMLLTAQNLPVSYNYCRLVSRSLTVRSSTLPGGVYALNGTINAVTFQGSLSELTDYSYNGLMSATANINDKIGNVLVGEGVTVLSLPTSYDLSYVRLGDPIPAAGLDPKLMATCDSSDRPRVYTVTAADEYQFSSQLIPSGVKTTLFTANIDALTSLSVGGELIFSQVTIHSIEVDVTIYFIGFDGTEVTVKAVATDFGLTTGTNNLVPFNLGGPTSEITQPITSMKLEVVTYKRGGTAGDPISWTVSGTLAVTVHGGNYPGALRPVTLVAYERVAAGSVVTVAGVSNFELIPNPELAKNLVTEYGRFDPGAMNYTKLILSERDRLGIKTVWPTREYTDFREYFMEVADLNSPLKIAGAFGFKDIIRAIRKIAVPVVSTLFPPAAPLAHANREGVDYLLGDEAQAASGTARGASGKARAASGRIRQLTLAADKGYEVVANMFQVPQNPIVDGILASPGILRGAHNLDCVSKEGATLFPVVITTLEDELTPKALNSKMFAVIEGAREDLQPPSQRGSFIRTLSGHRVYGYAPDGVLPLETGRDYTVVPIDDVWDDSIMLSQDPIPPIVGNSGNLAIAYMDVFRPKVPIHVAMTGALNASEIESVSFRSTKLATAHRLGMKLAGPGDYDINTGPNWATFIKRFPHNPRGWDRLPYLNLPYLPPTAGRQFHLALAASEFKETPELEDAVRAMDAAANADPLFRSALQVFMWLEENGIVTDMANFALSDPNAHRMKNFLANAPQAGSKSQRAKYGTAGYGVEARGPTPEEAQRAKDARISKKMETMGIYFATPEWVALNGHRGPSPGQLKYWQNTREIPEPNEDYPDYVHAEKSRLASEEQILRAATSIYGAPGQAEPPQAFIDEVARVYETNHGRVPNQEQMKDLLLTAMEMKHRNPRRAPPKPKPKPNAPSQRPPGRLGRWIRTVSDEDLE.

A divalent metal cation is bound at residue Asp30. The Peptidase S50 domain occupies Ala514–Ala755. Residue Ser653 is the Nucleophile of the active site. Lys692 is a catalytic residue. The disordered stretch occupies residues Met972–Glu1012. Over residues Arg975 to Pro986 the composition is skewed to basic residues. The interval Ile1003–Glu1012 is interaction with VP1 protein.

In terms of assembly, homotrimer. A central divalent metal stabilizes the VP2 trimer. Interacts with host ITGA4/ITGB1. As to quaternary structure, homodimer. Interacts (via C-terminus) with VP1 in the cytoplasm. Interacts with VP2. Specific enzymatic cleavages yield mature proteins. The capsid assembly seems to be regulated by polyprotein processing. The protease VP4 cleaves itself off the polyprotein, thus releasing pre-VP2 and VP3 within the infected cell. During capsid assembly, the C-terminus of pre-VP2 is further processed by VP4, giving rise to VP2, the external capsid protein and three small peptides that all stay closely associated with the capsid.

It localises to the virion. It is found in the host cytoplasm. Its function is as follows. Capsid protein VP2 self assembles to form an icosahedral capsid with a T=13 symmetry, about 70 nm in diameter, and consisting of 260 VP2 trimers. The capsid encapsulates the genomic dsRNA. VP2 is also involved in attachment and entry into the host cell by interacting with host ITGA4/ITGB1. Functionally, the precursor of VP2 plays an important role in capsid assembly. First, pre-VP2 and VP2 oligomers assemble to form a procapsid. Then, the pre-VP2 intermediates may be processed into VP2 proteins by proteolytic cleavage mediated by VP4 to obtain the mature virion. The final capsid is composed of pentamers and hexamers but VP2 has a natural tendency to assemble into all-pentameric structures. Therefore pre-VP2 may be required to allow formation of the hexameric structures. In terms of biological role, protease VP4 is a serine protease that cleaves the polyprotein into its final products. Pre-VP2 is first partially cleaved, and may be completely processed by VP4 upon capsid maturation. Capsid protein VP3 plays a key role in virion assembly by providing a scaffold for the capsid made of VP2. May self-assemble to form a T=4-like icosahedral inner-capsid composed of at least 180 trimers. Plays a role in genomic RNA packaging by recruiting VP1 into the capsid and interacting with the dsRNA genome segments to form a ribonucleoprotein complex. Additionally, the interaction of the VP3 C-terminal tail with VP1 removes the inherent structural blockade of the polymerase active site. Thus, VP3 can also function as a transcriptional activator. Its function is as follows. Structural peptide 1 is a small peptide derived from pre-VP2 C-terminus. It destabilizes and perforates cell membranes, suggesting a role during entry. Functionally, structural peptide 2 is a small peptide derived from pVP2 C-terminus. It is not essential for the virus viability, but viral growth is affected when missing. In terms of biological role, structural peptide 3 is a small peptide derived from pVP2 C-terminus. It is not essential for the virus viability, but viral growth is affected when missing. Structural peptide 4 is a small peptide derived from pVP2 C-terminus. It is essential for the virus viability. The sequence is that of Structural polyprotein from Gallus gallus (Chicken).